The following is a 151-amino-acid chain: Troponin C, isoallergen Bla g 6.0101 (151 aa).

4 EF-hand domains span residues 7-42 (EQIQ…LGHR), 43-78 (LDDD…FLVE), 83-118 (AMQQ…LDDK), and 119-151 (ITAE…MTGE). Residues Asp56, Asp58, Ser60, Glu62, and Glu67 each contribute to the Ca(2+) site. Ca(2+) contacts are provided by Asp132, Asp134, Ser136, Thr138, and Glu143.

The protein belongs to the troponin C family.

In terms of biological role, troponin is the central regulatory protein of striated muscle contraction. It consists of three components: Troponin-I (Tn-I) which is the inhibitor of actomyosin ATPase, Troponin-T (Tn-T) which contains the binding site for tropomyosin and Troponin-C (Tn-C). The binding of calcium to Tn-C abolishes the inhibitory action of Tn on actin filaments. In Blattella germanica (German cockroach), this protein is Troponin C, isoallergen Bla g 6.0101.